The sequence spans 276 residues: Formamidopyrimidine-DNA glycosylase (276 aa).

Residue proline 2 is the Schiff-base intermediate with DNA of the active site. Residue glutamate 3 is the Proton donor of the active site. The active-site Proton donor; for beta-elimination activity is lysine 58. Residues histidine 92, arginine 111, and lysine 154 each contribute to the DNA site. An FPG-type zinc finger spans residues 239–273 (QVYGHAGEECSSCGTILEKIKVNGRGTTFCPHCQV). Catalysis depends on arginine 263, which acts as the Proton donor; for delta-elimination activity.

It belongs to the FPG family. In terms of assembly, monomer. It depends on Zn(2+) as a cofactor.

It catalyses the reaction Hydrolysis of DNA containing ring-opened 7-methylguanine residues, releasing 2,6-diamino-4-hydroxy-5-(N-methyl)formamidopyrimidine.. It carries out the reaction 2'-deoxyribonucleotide-(2'-deoxyribose 5'-phosphate)-2'-deoxyribonucleotide-DNA = a 3'-end 2'-deoxyribonucleotide-(2,3-dehydro-2,3-deoxyribose 5'-phosphate)-DNA + a 5'-end 5'-phospho-2'-deoxyribonucleoside-DNA + H(+). In terms of biological role, involved in base excision repair of DNA damaged by oxidation or by mutagenic agents. Acts as a DNA glycosylase that recognizes and removes damaged bases. Has a preference for oxidized purines, such as 7,8-dihydro-8-oxoguanine (8-oxoG). Has AP (apurinic/apyrimidinic) lyase activity and introduces nicks in the DNA strand. Cleaves the DNA backbone by beta-delta elimination to generate a single-strand break at the site of the removed base with both 3'- and 5'-phosphates. This chain is Formamidopyrimidine-DNA glycosylase, found in Lactobacillus gasseri (strain ATCC 33323 / DSM 20243 / BCRC 14619 / CIP 102991 / JCM 1131 / KCTC 3163 / NCIMB 11718 / NCTC 13722 / AM63).